A 311-amino-acid chain; its full sequence is AT-hook motif nuclear-localized protein 27 (311 aa).

Residues 40 to 105 are disordered; the sequence is HHHQHQQHQQ…KNKAKPPIIV (66 aa). Over residues 55 to 75 the composition is skewed to basic and acidic residues; sequence DDSRESDHSNKDHHQQGRPDS. The segment at residues 86-98 is a DNA-binding region (a.T hook); sequence KRPRGRPPGSKNK. The 149-residue stretch at 110–258 folds into the PPC domain; sequence PNALRSHVLE…EEGGGGGGGG (149 aa). A required for the binding to non-AHL interactors region spans residues 178 to 183; that stretch reads GRFEIL. The segment at 246–311 is disordered; it reads EEEEEGGGGG…GAGTPSRPPF (66 aa). Residues 252 to 262 show a composition bias toward gly residues; the sequence is GGGGGGGGGGP. The span at 263 to 277 shows a compositional bias: low complexity; the sequence is PQMQQAPSASPPSGV. The span at 278–292 shows a compositional bias: gly residues; the sequence is TGQGQLGGNVGGYGF.

As to quaternary structure, homodimer. Interacts with AHL12, AHL25, AHL29, TCP4, TCP13, EF114, ATAF2/NAC081, histone H2B.1, histone H3.3 and histone H4. In terms of tissue distribution, expressed in the hypocotyl and the vascular tissue of seedling.

It localises to the nucleus. In terms of biological role, transcription factor that specifically binds AT-rich DNA sequences related to the nuclear matrix attachment regions (MARs). Negatively regulates plant innate immunity (PTI) to pathogens through the down-regulation of the PAMP-triggered FRK1 expression. Acts redundantly with AHL18, AHL22 and AHL29 in the regulation of flowering and regulation of the hypocotyl elongation. Acts as a chromatin remodeling factor that negatively regulates the leaf senescence. Acts redundantly with AHL29/SOB3 to modulate hypocotyl growth inhibition in response to light. The protein is AT-hook motif nuclear-localized protein 27 of Arabidopsis thaliana (Mouse-ear cress).